The following is a 335-amino-acid chain: Phosphate acyltransferase (335 aa).

It belongs to the PlsX family. As to quaternary structure, homodimer. Probably interacts with PlsY.

Its subcellular location is the cytoplasm. The enzyme catalyses a fatty acyl-[ACP] + phosphate = an acyl phosphate + holo-[ACP]. Its pathway is lipid metabolism; phospholipid metabolism. Catalyzes the reversible formation of acyl-phosphate (acyl-PO(4)) from acyl-[acyl-carrier-protein] (acyl-ACP). This enzyme utilizes acyl-ACP as fatty acyl donor, but not acyl-CoA. This is Phosphate acyltransferase from Streptococcus equi subsp. zooepidemicus (strain H70).